We begin with the raw amino-acid sequence, 1010 residues long: Pre-mRNA-splicing factor cwc22 (1010 aa).

Residues 1-10 (MASADMSPSR) show a composition bias toward polar residues. A disordered region spans residues 1–166 (MASADMSPSR…RTPTPPPVAV (166 aa)). The span at 18–28 (RSPSPRTQSPS) shows a compositional bias: low complexity. Basic and acidic residues-rich tracts occupy residues 29–39 (PRDEDGSRSPG) and 65–78 (PRRDRSLSPRDQPH). Positions 84 to 109 (RSPTPRSQSPSRRSVRSPSPRQGSPA) are enriched in low complexity. Positions 142 to 158 (RHRDAGGDYRPVRKERT) are enriched in basic and acidic residues. One can recognise an MIF4G domain in the interval 222–405 (KKSVNGLVNK…EVLFQVRKDK (184 aa)). Positions 466–498 (GEASDDDEDDDDDDESESGSESEDEEQKALEIK) are disordered. The span at 468 to 491 (ASDDDEDDDDDDESESGSESEDEE) shows a compositional bias: acidic residues. Residues 507-623 (NLRRTIYLSI…GWHVFSVIHL (117 aa)) enclose the MI domain. The segment at 708-1010 (LPAPPADSDS…SPVAKRGRVD (303 aa)) is disordered. Over residues 718 to 732 (ESVSSYSSYSSYSSR) the composition is skewed to low complexity. Positions 753 to 775 (PPRRGRGRSYSRTPSRSRSRSRS) are enriched in basic residues. Over residues 776 to 787 (YSRSVSKSVSRS) the composition is skewed to low complexity. Composition is skewed to basic residues over residues 834–846 (RRGRSGTRSRSRS) and 899–910 (RLRRGSYSRSRS). A compositionally biased stretch (low complexity) spans 911–935 (RSPIPIRGNGPAGRDTGRAGPAPAR). The segment covering 936–948 (GGRRNRSYSRSRT) has biased composition (basic residues). The span at 961-973 (SRRVVSRSPSPVV) shows a compositional bias: low complexity. Positions 976 to 1010 (NKRRRSYSSSRSRSRSSSRSRYRSRSPVAKRGRVD) are enriched in basic residues.

It belongs to the CWC22 family. In terms of assembly, associated with the spliceosome.

It is found in the cytoplasm. It localises to the nucleus. Involved in pre-mRNA splicing. This is Pre-mRNA-splicing factor cwc22 (msp-1) from Neurospora crassa (strain ATCC 24698 / 74-OR23-1A / CBS 708.71 / DSM 1257 / FGSC 987).